The sequence spans 512 residues: Cytochrome P450 1A1 (512 aa).

The mitochondrial targeting signal stretch occupies residues 29 to 40 (SRPQVPKGLKNP). Ser-67 carries O-linked (GlcNAc) serine glycosylation. A substrate-binding site is contributed by Phe-224. A heme-binding site is contributed by Cys-457.

Belongs to the cytochrome P450 family. As to quaternary structure, interacts with cytosolic chaperones HSP70 and HSP90; this interaction is required for initial targeting to mitochondria. Interacts (via mitochondrial targeting signal) with TOMM40 (via N-terminus); this interaction is required for translocation across the mitochondrial outer membrane. Heme is required as a cofactor. In terms of tissue distribution, lung, lymphocytes and placenta.

The protein resides in the endoplasmic reticulum membrane. Its subcellular location is the mitochondrion inner membrane. The protein localises to the microsome membrane. It is found in the cytoplasm. The enzyme catalyses an organic molecule + reduced [NADPH--hemoprotein reductase] + O2 = an alcohol + oxidized [NADPH--hemoprotein reductase] + H2O + H(+). It catalyses the reaction estrone + reduced [NADPH--hemoprotein reductase] + O2 = 2-hydroxyestrone + oxidized [NADPH--hemoprotein reductase] + H2O + H(+). It carries out the reaction estrone + reduced [NADPH--hemoprotein reductase] + O2 = 4-hydroxyestrone + oxidized [NADPH--hemoprotein reductase] + H2O + H(+). The catalysed reaction is estrone + reduced [NADPH--hemoprotein reductase] + O2 = 6alpha-hydroxyestrone + oxidized [NADPH--hemoprotein reductase] + H2O + H(+). The enzyme catalyses estrone + reduced [NADPH--hemoprotein reductase] + O2 = 15alpha-hydroxyestrone + oxidized [NADPH--hemoprotein reductase] + H2O + H(+). It catalyses the reaction estrone + reduced [NADPH--hemoprotein reductase] + O2 = 16alpha-hydroxyestrone + oxidized [NADPH--hemoprotein reductase] + H2O + H(+). It carries out the reaction 17beta-estradiol + reduced [NADPH--hemoprotein reductase] + O2 = 2-hydroxy-17beta-estradiol + oxidized [NADPH--hemoprotein reductase] + H2O + H(+). The catalysed reaction is 17beta-estradiol + reduced [NADPH--hemoprotein reductase] + O2 = 4-hydroxy-17beta-estradiol + oxidized [NADPH--hemoprotein reductase] + H2O + H(+). The enzyme catalyses 17beta-estradiol + reduced [NADPH--hemoprotein reductase] + O2 = 6alpha-hydroxy-17beta-estradiol + oxidized [NADPH--hemoprotein reductase] + H2O + H(+). It catalyses the reaction 17beta-estradiol + reduced [NADPH--hemoprotein reductase] + O2 = 7alpha-hydroxy-17beta-estradiol + oxidized [NADPH--hemoprotein reductase] + H2O + H(+). It carries out the reaction 17beta-estradiol + reduced [NADPH--hemoprotein reductase] + O2 = 15alpha-hydroxy-17beta-estradiol + oxidized [NADPH--hemoprotein reductase] + H2O + H(+). The catalysed reaction is (5Z,8Z,11Z)-eicosatrienoate + reduced [NADPH--hemoprotein reductase] + O2 = 19-hydroxy-(5Z,8Z,11Z)-eicosatrienoate + oxidized [NADPH--hemoprotein reductase] + H2O + H(+). The enzyme catalyses (5Z,8Z,11Z,14Z)-eicosatetraenoate + reduced [NADPH--hemoprotein reductase] + O2 = 16-hydroxy-(5Z,8Z,11Z,14Z)-eicosatetraenoate + oxidized [NADPH--hemoprotein reductase] + H2O + H(+). It catalyses the reaction (5Z,8Z,11Z,14Z)-eicosatetraenoate + reduced [NADPH--hemoprotein reductase] + O2 = 17-hydroxy-(5Z,8Z,11Z,14Z)-eicosatetraenoate + oxidized [NADPH--hemoprotein reductase] + H2O + H(+). It carries out the reaction (5Z,8Z,11Z,14Z)-eicosatetraenoate + reduced [NADPH--hemoprotein reductase] + O2 = 18-hydroxy-(5Z,8Z,11Z,14Z)-eicosatetraenoate + oxidized [NADPH--hemoprotein reductase] + H2O + H(+). The catalysed reaction is (5Z,8Z,11Z,14Z)-eicosatetraenoate + reduced [NADPH--hemoprotein reductase] + O2 = 19-hydroxy-(5Z,8Z,11Z,14Z)-eicosatetraenoate + oxidized [NADPH--hemoprotein reductase] + H2O + H(+). The enzyme catalyses (5Z,8Z,11Z,14Z,17Z)-eicosapentaenoate + reduced [NADPH--hemoprotein reductase] + O2 = 19-hydroxy-(5Z,8Z,11Z,14Z,17Z)-eicosapentaenoate + oxidized [NADPH--hemoprotein reductase] + H2O + H(+). It catalyses the reaction (5Z,8Z,11Z,14Z)-eicosatetraenoate + reduced [NADPH--hemoprotein reductase] + O2 = (8R,9S)-epoxy-(5Z,11Z,14Z)-eicosatrienoate + oxidized [NADPH--hemoprotein reductase] + H2O + H(+). It carries out the reaction (5Z,8Z,11Z,14Z)-eicosatetraenoate + reduced [NADPH--hemoprotein reductase] + O2 = (11R,12S)-epoxy-(5Z,8Z,14Z)-eicosatrienoate + oxidized [NADPH--hemoprotein reductase] + H2O + H(+). The catalysed reaction is (5Z,8Z,11Z,14Z)-eicosatetraenoate + reduced [NADPH--hemoprotein reductase] + O2 = (14S,15R)-epoxy-(5Z,8Z,11Z)-eicosatrienoate + oxidized [NADPH--hemoprotein reductase] + H2O + H(+). The enzyme catalyses (5Z,8Z,11Z,14Z)-eicosatetraenoate + reduced [NADPH--hemoprotein reductase] + O2 = (14R,15S)-epoxy-(5Z,8Z,11Z)-eicosatrienoate + oxidized [NADPH--hemoprotein reductase] + H2O + H(+). It catalyses the reaction (5Z,8Z,11Z,14Z,17Z)-eicosapentaenoate + reduced [NADPH--hemoprotein reductase] + O2 = (17R,18S)-epoxy-(5Z,8Z,11Z,14Z)-eicosatetraenoate + oxidized [NADPH--hemoprotein reductase] + H2O + H(+). It carries out the reaction (4Z,7Z,10Z,13Z,16Z,19Z)-docosahexaenoate + reduced [NADPH--hemoprotein reductase] + O2 = (19S,20R)-epoxy-(4Z,7Z,10Z,13Z,16Z)-docosapentaenoate + oxidized [NADPH--hemoprotein reductase] + H2O + H(+). The catalysed reaction is (4Z,7Z,10Z,13Z,16Z,19Z)-docosahexaenoate + reduced [NADPH--hemoprotein reductase] + O2 = (19R,20S)-epoxy-(4Z,7Z,10Z,13Z,16Z)-docosapentaenoate + oxidized [NADPH--hemoprotein reductase] + H2O + H(+). The enzyme catalyses all-trans-retinol + reduced [NADPH--hemoprotein reductase] + O2 = all-trans-retinal + oxidized [NADPH--hemoprotein reductase] + 2 H2O + H(+). It catalyses the reaction all-trans-retinal + reduced [NADPH--hemoprotein reductase] + O2 = all-trans-retinoate + oxidized [NADPH--hemoprotein reductase] + H2O + 2 H(+). It carries out the reaction (13S)-hydroperoxy-(9Z,11E)-octadecadienoate = 13-oxo-(9Z,11E)-octadecadienoate + H2O. The catalysed reaction is (12S)-hydroperoxy-(5Z,8Z,10E,14Z)-eicosatetraenoate = 12-oxo-(5Z,8Z,10E,14Z)-eicosatetraenoate + H2O. The enzyme catalyses (15S)-hydroperoxy-(5Z,8Z,11Z,13E)-eicosatetraenoate = 15-oxo-(5Z,8Z,11Z,13E)-eicosatetraenoate + H2O. It catalyses the reaction (5S)-hydroperoxy-(6E,8Z,11Z,14Z)-eicosatetraenoate = 5-oxo-(6E,8Z,11Z,14Z)-eicosatetraenoate + H2O. It participates in steroid hormone biosynthesis. Its pathway is lipid metabolism; fatty acid metabolism. The protein operates within cofactor metabolism; retinol metabolism. A cytochrome P450 monooxygenase involved in the metabolism of various endogenous substrates, including fatty acids, steroid hormones and vitamins. Mechanistically, uses molecular oxygen inserting one oxygen atom into a substrate, and reducing the second into a water molecule, with two electrons provided by NADPH via cytochrome P450 reductase (NADPH--hemoprotein reductase). Catalyzes the hydroxylation of carbon-hydrogen bonds. Exhibits high catalytic activity for the formation of hydroxyestrogens from estrone (E1) and 17beta-estradiol (E2), namely 2-hydroxy E1 and E2, as well as D-ring hydroxylated E1 and E2 at the C15-alpha and C16-alpha positions. Displays different regioselectivities for polyunsaturated fatty acids (PUFA) hydroxylation. Catalyzes the epoxidation of double bonds of certain PUFA. Converts arachidonic acid toward epoxyeicosatrienoic acid (EET) regioisomers, 8,9-, 11,12-, and 14,15-EET, that function as lipid mediators in the vascular system. Displays an absolute stereoselectivity in the epoxidation of eicosapentaenoic acid (EPA) producing the 17(R),18(S) enantiomer. May play an important role in all-trans retinoic acid biosynthesis in extrahepatic tissues. Catalyzes two successive oxidative transformation of all-trans retinol to all-trans retinal and then to the active form all-trans retinoic acid. May also participate in eicosanoids metabolism by converting hydroperoxide species into oxo metabolites (lipoxygenase-like reaction, NADPH-independent). The chain is Cytochrome P450 1A1 from Homo sapiens (Human).